A 536-amino-acid chain; its full sequence is Putative UDP-glucuronosyltransferase ugt-47 (536 aa).

Positions 1-21 are cleaved as a signal peptide; the sequence is MFRYHSILLLAILYFFEYGLA. Residues Asn52 and Asn308 are each glycosylated (N-linked (GlcNAc...) asparagine). The helical transmembrane segment at 497 to 517 threads the bilayer; sequence IIVPCFFVAFYFIIFPFFKLF.

Belongs to the UDP-glycosyltransferase family.

Its subcellular location is the membrane. The catalysed reaction is glucuronate acceptor + UDP-alpha-D-glucuronate = acceptor beta-D-glucuronoside + UDP + H(+). The sequence is that of Putative UDP-glucuronosyltransferase ugt-47 (ugt-47) from Caenorhabditis elegans.